We begin with the raw amino-acid sequence, 373 residues long: Molybdenum import ATP-binding protein ModC (373 aa).

The 237-residue stretch at 4-240 (LTPPTIRAAF…PKLPLAIARD (237 aa)) folds into the ABC transporter domain. 38–45 (GPSGCGKS) contacts ATP. The region spanning 299 to 369 (ASSILNAIAA…IKGVALAPGR (71 aa)) is the Mop domain.

The protein belongs to the ABC transporter superfamily. Molybdate importer (TC 3.A.1.8) family. The complex is composed of two ATP-binding proteins (ModC), two transmembrane proteins (ModB) and a solute-binding protein (ModA).

Its subcellular location is the cell inner membrane. The enzyme catalyses molybdate(out) + ATP + H2O = molybdate(in) + ADP + phosphate + H(+). Part of the ABC transporter complex ModABC involved in molybdenum import. Responsible for energy coupling to the transport system. This chain is Molybdenum import ATP-binding protein ModC, found in Rhodopseudomonas palustris (strain ATCC BAA-98 / CGA009).